The sequence spans 91 residues: Small ribosomal subunit protein bS20 (91 aa).

Positions 1-25 (MANTKSAEKRHRQSLKRRARNVTVR) are disordered. The segment covering 8–20 (EKRHRQSLKRRAR) has biased composition (basic residues).

It belongs to the bacterial ribosomal protein bS20 family.

Binds directly to 16S ribosomal RNA. This Myxococcus xanthus (strain DK1622) protein is Small ribosomal subunit protein bS20.